The following is a 441-amino-acid chain: Vacuolar cation/proton exchanger 5 (441 aa).

Glycine 2 is lipidated: N-myristoyl glycine. Residues 2–69 (GCCKVPALIQ…PNNSVLQSFK (68 aa)) are Cytoplasmic-facing. S-palmitoyl cysteine attachment occurs at residues cysteine 3 and cysteine 4. Residues 70 to 90 (IVILSNKLNLLLPFGPLAILL) traverse the membrane as a helical segment. Residues 91–97 (HYLTDNK) are Extracellular-facing. Residues 98 to 118 (GWIFLLSLVGITPLAERLGYA) traverse the membrane as a helical segment. Residues 119-129 (TEQLACYTGST) are Cytoplasmic-facing. Residues 130 to 150 (VGGLLNATFGNVTELIISIFA) traverse the membrane as a helical segment. A cation selection region spans residues 139-174 (GNVTELIISIFALKSGMIRVVQLTLLGSILSNMLLV). Residues 151–165 (LKSGMIRVVQLTLLG) are Extracellular-facing. A helical transmembrane segment spans residues 166–186 (SILSNMLLVLGCAFFCGGLVF). At 187 to 197 (SQKEQVFDKGN) the chain is on the cytoplasmic side. Residues 198-218 (AVVNSGLLLMAVMGLLFPAVL) traverse the membrane as a helical segment. Topologically, residues 219 to 231 (HYTHSEVHAGSSE) are extracellular. A helical membrane pass occupies residues 232–252 (LALSRFSSCIMLVAYAAYLFF). The Cytoplasmic portion of the chain corresponds to 253–286 (QLKSQPSSYTPLTEETNQNEETSDDDEDPEISKW). Residues 287–307 (EAIIWLSILTAWVSLLSGYLV) form a helical membrane-spanning segment. The Extracellular segment spans residues 308-311 (DAIE). The chain crosses the membrane as a helical span at residues 312 to 332 (GASVSWKIPISFISVILLPIV). The Cytoplasmic portion of the chain corresponds to 333–354 (GNAAEHAGAIMFAMKDKLDLSL). The segment at 333–368 (GNAAEHAGAIMFAMKDKLDLSLGVAIGSSIQISMFA) is cation selection. A helical transmembrane segment spans residues 355-375 (GVAIGSSIQISMFAVPFCVVI). The Extracellular portion of the chain corresponds to 376–384 (GWMMGAQMD). The helical transmembrane segment at 385-405 (LNFQLFETATLFITVIVVAFF) threads the bilayer. The Cytoplasmic portion of the chain corresponds to 406-412 (LQEGTSN). Residues 413–433 (YFKGLMLILCYLIVAASFFVH) form a helical membrane-spanning segment. Residues 434–441 (EDPHQDDI) lie on the Extracellular side of the membrane.

It belongs to the Ca(2+):cation antiporter (CaCA) (TC 2.A.19) family. Cation/proton exchanger (CAX) subfamily.

The protein localises to the vacuole membrane. Functionally, vacuolar cation/proton exchanger (CAX). Translocates Ca(2+) and other metal ions into vacuoles using the proton gradient formed by H(+)-ATPase and H(+)-pyrophosphatase. The sequence is that of Vacuolar cation/proton exchanger 5 (CAX5) from Arabidopsis thaliana (Mouse-ear cress).